Reading from the N-terminus, the 474-residue chain is Putative matrix metalloproteinase (474 aa).

The signal sequence occupies residues 1–17 (MIIYFAVITCSLKLCRS). A Zn(2+)-binding site is contributed by histidine 189. The active site involves glutamate 190. 2 residues coordinate Zn(2+): histidine 193 and histidine 199. One copy of the Hemopexin repeat lies at 299-344 (AGVYDAISYVRGDLYVFVGDLHWRFDTSGMLHNGYPQPTGATWRLP).

The protein belongs to the peptidase M10A family. Zn(2+) serves as cofactor.

This chain is Putative matrix metalloproteinase, found in Heliothis virescens ascovirus 3e (HvAV-3e).